A 502-amino-acid chain; its full sequence is Lipoyl synthase, apicoplast (502 aa).

An N-terminal signal peptide occupies residues 1–16; the sequence is MNFLVLFFSYSIFVLP. [4Fe-4S] cluster contacts are provided by Cys-192, Cys-197, Cys-203, Cys-218, Cys-222, Cys-225, and Ser-433. A Radical SAM core domain is found at 204 to 422; sequence WNIGTATIML…KDVGLKMGFK (219 aa).

Belongs to the radical SAM superfamily. Lipoyl synthase family. The cofactor is [4Fe-4S] cluster.

The protein resides in the plastid. The protein localises to the apicoplast. It carries out the reaction [[Fe-S] cluster scaffold protein carrying a second [4Fe-4S](2+) cluster] + N(6)-octanoyl-L-lysyl-[protein] + 2 oxidized [2Fe-2S]-[ferredoxin] + 2 S-adenosyl-L-methionine + 4 H(+) = [[Fe-S] cluster scaffold protein] + N(6)-[(R)-dihydrolipoyl]-L-lysyl-[protein] + 4 Fe(3+) + 2 hydrogen sulfide + 2 5'-deoxyadenosine + 2 L-methionine + 2 reduced [2Fe-2S]-[ferredoxin]. Its pathway is protein modification; protein lipoylation via endogenous pathway; protein N(6)-(lipoyl)lysine from octanoyl-[acyl-carrier-protein]: step 2/2. Functionally, catalyzes the radical-mediated insertion of two sulfur atoms into the C-6 and C-8 positions of the octanoyl moiety bound to the lipoyl domains of lipoate-dependent enzymes, thereby converting the octanoylated domains into lipoylated derivatives. The protein is Lipoyl synthase, apicoplast of Plasmodium yoelii yoelii.